Reading from the N-terminus, the 264-residue chain is Ribosomal RNA small subunit methyltransferase A (264 aa).

6 residues coordinate S-adenosyl-L-methionine: His-15, Leu-17, Gly-42, Glu-63, Asp-88, and Asn-109.

The protein belongs to the class I-like SAM-binding methyltransferase superfamily. rRNA adenine N(6)-methyltransferase family. RsmA subfamily.

The protein localises to the cytoplasm. The enzyme catalyses adenosine(1518)/adenosine(1519) in 16S rRNA + 4 S-adenosyl-L-methionine = N(6)-dimethyladenosine(1518)/N(6)-dimethyladenosine(1519) in 16S rRNA + 4 S-adenosyl-L-homocysteine + 4 H(+). Specifically dimethylates two adjacent adenosines (A1518 and A1519) in the loop of a conserved hairpin near the 3'-end of 16S rRNA in the 30S particle. May play a critical role in biogenesis of 30S subunits. The sequence is that of Ribosomal RNA small subunit methyltransferase A from Nitrosococcus oceani (strain ATCC 19707 / BCRC 17464 / JCM 30415 / NCIMB 11848 / C-107).